Consider the following 452-residue polypeptide: Bifunctional protein GlmU (452 aa).

The pyrophosphorylase stretch occupies residues 1–226 (MAFSVVVLAA…AVEVEGVNNR (226 aa)). UDP-N-acetyl-alpha-D-glucosamine is bound by residues 8–11 (LAAG), lysine 22, glutamine 73, and 78–79 (GT). Aspartate 102 contacts Mg(2+). Glycine 137, glutamate 151, asparagine 166, and asparagine 224 together coordinate UDP-N-acetyl-alpha-D-glucosamine. Asparagine 224 lines the Mg(2+) pocket. The segment at 227–247 (LQLANLERALQNRQADELMTN) is linker. The N-acetyltransferase stretch occupies residues 248 to 452 (GVTLLDPSRF…IPNWPRPTKK (205 aa)). UDP-N-acetyl-alpha-D-glucosamine is bound by residues arginine 330 and lysine 348. The active-site Proton acceptor is histidine 360. Residues tyrosine 363 and asparagine 374 each coordinate UDP-N-acetyl-alpha-D-glucosamine. Acetyl-CoA-binding positions include alanine 377, 383-384 (NY), serine 402, alanine 420, and arginine 437.

The protein in the N-terminal section; belongs to the N-acetylglucosamine-1-phosphate uridyltransferase family. This sequence in the C-terminal section; belongs to the transferase hexapeptide repeat family. In terms of assembly, homotrimer. Mg(2+) is required as a cofactor.

The protein resides in the cytoplasm. The enzyme catalyses alpha-D-glucosamine 1-phosphate + acetyl-CoA = N-acetyl-alpha-D-glucosamine 1-phosphate + CoA + H(+). The catalysed reaction is N-acetyl-alpha-D-glucosamine 1-phosphate + UTP + H(+) = UDP-N-acetyl-alpha-D-glucosamine + diphosphate. The protein operates within nucleotide-sugar biosynthesis; UDP-N-acetyl-alpha-D-glucosamine biosynthesis; N-acetyl-alpha-D-glucosamine 1-phosphate from alpha-D-glucosamine 6-phosphate (route II): step 2/2. Its pathway is nucleotide-sugar biosynthesis; UDP-N-acetyl-alpha-D-glucosamine biosynthesis; UDP-N-acetyl-alpha-D-glucosamine from N-acetyl-alpha-D-glucosamine 1-phosphate: step 1/1. It participates in bacterial outer membrane biogenesis; LPS lipid A biosynthesis. Catalyzes the last two sequential reactions in the de novo biosynthetic pathway for UDP-N-acetylglucosamine (UDP-GlcNAc). The C-terminal domain catalyzes the transfer of acetyl group from acetyl coenzyme A to glucosamine-1-phosphate (GlcN-1-P) to produce N-acetylglucosamine-1-phosphate (GlcNAc-1-P), which is converted into UDP-GlcNAc by the transfer of uridine 5-monophosphate (from uridine 5-triphosphate), a reaction catalyzed by the N-terminal domain. The chain is Bifunctional protein GlmU from Alteromonas mediterranea (strain DSM 17117 / CIP 110805 / LMG 28347 / Deep ecotype).